The chain runs to 216 residues: MISFIKGVLIEKDPTALLIDVNGIGYEVFVPMTTFYTLGDIDSQVSLYTHFVVREDAQQLYGFKSKVDKKVFQELIKVNGIGARTAIAILSGMDSKTLLHCIENKDYALLATVPGIGKKTAERLVVEIYDKLLKMANEIYAQTSGTTTTSQDSQAQQAPTSAVLANSIFNESVDALLALGYKQKDAEKMSRSAMGDATTAAEVIRKALQGSIRSKR.

A domain I region spans residues 1-64 (MISFIKGVLI…EDAQQLYGFK (64 aa)). Residues 65–143 (SKVDKKVFQE…KMANEIYAQT (79 aa)) are domain II. The segment at 144 to 163 (SGTTTTSQDSQAQQAPTSAV) is flexible linker. The segment at 164–216 (LANSIFNESVDALLALGYKQKDAEKMSRSAMGDATTAAEVIRKALQGSIRSKR) is domain III.

It belongs to the RuvA family. As to quaternary structure, homotetramer. Forms an RuvA(8)-RuvB(12)-Holliday junction (HJ) complex. HJ DNA is sandwiched between 2 RuvA tetramers; dsDNA enters through RuvA and exits via RuvB. An RuvB hexamer assembles on each DNA strand where it exits the tetramer. Each RuvB hexamer is contacted by two RuvA subunits (via domain III) on 2 adjacent RuvB subunits; this complex drives branch migration. In the full resolvosome a probable DNA-RuvA(4)-RuvB(12)-RuvC(2) complex forms which resolves the HJ.

It is found in the cytoplasm. In terms of biological role, the RuvA-RuvB-RuvC complex processes Holliday junction (HJ) DNA during genetic recombination and DNA repair, while the RuvA-RuvB complex plays an important role in the rescue of blocked DNA replication forks via replication fork reversal (RFR). RuvA specifically binds to HJ cruciform DNA, conferring on it an open structure. The RuvB hexamer acts as an ATP-dependent pump, pulling dsDNA into and through the RuvAB complex. HJ branch migration allows RuvC to scan DNA until it finds its consensus sequence, where it cleaves and resolves the cruciform DNA. This chain is Holliday junction branch migration complex subunit RuvA, found in Francisella tularensis subsp. novicida (strain U112).